Reading from the N-terminus, the 370-residue chain is Phosphoribosylformylglycinamidine cyclo-ligase (370 aa).

Belongs to the AIR synthase family.

It localises to the cytoplasm. The enzyme catalyses 2-formamido-N(1)-(5-O-phospho-beta-D-ribosyl)acetamidine + ATP = 5-amino-1-(5-phospho-beta-D-ribosyl)imidazole + ADP + phosphate + H(+). Its pathway is purine metabolism; IMP biosynthesis via de novo pathway; 5-amino-1-(5-phospho-D-ribosyl)imidazole from N(2)-formyl-N(1)-(5-phospho-D-ribosyl)glycinamide: step 2/2. This chain is Phosphoribosylformylglycinamidine cyclo-ligase, found in Rhodospirillum rubrum (strain ATCC 11170 / ATH 1.1.1 / DSM 467 / LMG 4362 / NCIMB 8255 / S1).